The following is a 546-amino-acid chain: MAWPKLPAPWLLLCTWLPAGCLSLLVTVQHTERYVTLFASIILKCDYTTSAQLQDVVVTWRFKSFCKDPIFDYYSASYQAALSLGQDPSNDCNDNQREVRIVAQRRGQNEPVLGVDYRQRKITIQNRADLVINEVMWWDHGVYYCTIEAPGDTSGDPDKEVKLIVLHWLTVIFIILGALLLLLLIGVCWCQCCPQYCCCYIRCPCCPAHCCCPEEALARHRYMKQAQALGPQMMGKPLYWGADRSSQVSSYPMHPLLQRDLSLPSSLPQMPMTQTTNQPPIANGVLEYLEKELRNLNLAQPLPPDLKGRFGHPCSMLSSLGSEVVERRIIHLPPLIRDLSSSRRTSDSLHQQWLTPIPSRPWDLREGRSHHHYPDFHQELQDRGPKSWALERRELDPSWSGRHRSSRLNGSPIHWSDRDSLSDVPSSSEARWRPSHPPFRSRCQERPRRPSPRESTQRHGRRRRHRSYSPPLPSGLSSWSSEEDKERQPQSWRAHRRGSHSPHWPEEKPPSYRSLDITPGKNSRKKGSVERRSEKDSSHSGRSVVI.

The N-terminal stretch at 1–23 (MAWPKLPAPWLLLCTWLPAGCLS) is a signal peptide. Residues 24-162 (LLVTVQHTER…TSGDPDKEVK (139 aa)) form the Ig-like V-type domain. Over 24-167 (LLVTVQHTER…DKEVKLIVLH (144 aa)) the chain is Extracellular. Cys-45 and Cys-145 are disulfide-bonded. A helical membrane pass occupies residues 168 to 188 (WLTVIFIILGALLLLLLIGVC). Topologically, residues 189 to 546 (WCQCCPQYCC…SSHSGRSVVI (358 aa)) are cytoplasmic. The segment at 399–546 (WSGRHRSSRL…SSHSGRSVVI (148 aa)) is disordered. Residues 442 to 457 (RCQERPRRPSPRESTQ) are compositionally biased toward basic and acidic residues. Over residues 458-467 (RHGRRRRHRS) the composition is skewed to basic residues. Phosphoserine occurs at positions 499 and 501. Basic and acidic residues predominate over residues 527 to 539 (GSVERRSEKDSSH).

The protein belongs to the immunoglobulin superfamily. LISCH7 family. Homooligomer. Interacts with MARVELD2 and OCLN; the interaction is required to recruit MARVELD2 to tricellular contacts. Interacts (via C-terminus) with TRA2A, TRA2B and SRSF1. Interacts with PLSCR1. In terms of tissue distribution, mainly expressed in prostate and to a lower extent in testis, pancreas, kidney, heart and liver.

Its subcellular location is the cell membrane. The protein resides in the cell junction. It is found in the tight junction. It localises to the cytoplasm. The protein localises to the cytosol. Its function is as follows. Maintains epithelial barrier function by recruiting MARVELD2/tricellulin to tricellular tight junctions (tTJs). Crucial for normal hearing by maintaining the structural and functional integrity of tTJs, which are critical for the survival of auditory neurosensory HCs. Mediates fatty acids and lipoproteins-stimulated CCK/cholecystokinin secretion in the small intestine. In the inner ear, may regulate alternative pre-mRNA splicing via binding to TRA2A, TRA2B and SRSF1. (Microbial infection) Promotes influenza virus infection by inhibiting viral nucleoprotein NP binding to PLSCR1 and thereby PLSCR1-mediated antiviral activity. The sequence is that of Immunoglobulin-like domain-containing receptor 1 from Homo sapiens (Human).